Consider the following 277-residue polypeptide: R-spondin-3 (277 aa).

A signal peptide spans 1 to 21 (MHLRLISCFFIILNFMEYIGS). FU repeat units lie at residues 35–86 (PNVS…GYYG) and 92–135 (INKC…GLEA). Asn36 carries an N-linked (GlcNAc...) asparagine glycan. 11 disulfides stabilise this stretch: Cys41-Cys48, Cys45-Cys54, Cys57-Cys76, Cys80-Cys95, Cys98-Cys105, Cys102-Cys111, Cys114-Cys125, Cys129-Cys142, Cys148-Cys190, Cys159-Cys166, and Cys199-Cys206. The region spanning 147–207 (HCEASEWSPW…TCIVQRKKCS (61 aa)) is the TSP type-1 domain. The segment at 210-277 (ERGKKGRERK…QKSVSVSTVH (68 aa)) is disordered. A compositionally biased stretch (basic residues) spans 213-223 (KKGRERKRKKL). Low complexity predominate over residues 232–245 (SSSSDSKGLESSIE).

It belongs to the R-spondin family. Interacts with the extracellular domain of FZD8 and LRP6. It however does not form a ternary complex with FZD8 and LRP6. Interacts with WNT1. Binds heparin. Interacts with LGR4, LGR5 and LGR6. As to expression, highly expressed in endothelial cells.

Its subcellular location is the secreted. Its function is as follows. Activator of the canonical Wnt signaling pathway by acting as a ligand for LGR4-6 receptors, which acts as a key regulator of angiogenesis. Upon binding to LGR4-6 (LGR4, LGR5 or LGR6), LGR4-6 associate with phosphorylated LRP6 and frizzled receptors that are activated by extracellular Wnt receptors, triggering the canonical Wnt signaling pathway to increase expression of target genes. Also regulates the canonical Wnt/beta-catenin-dependent pathway and non-canonical Wnt signaling by acting as an inhibitor of ZNRF3, an important regulator of the Wnt signaling pathway. Acts as a ligand for frizzled FZD8 and LRP6. May negatively regulate the TGF-beta pathway. Acts as a key regulator of angiogenesis by controlling vascular stability and pruning: acts by activating the non-canonical Wnt signaling pathway in endothelial cells. Can also amplify Wnt signaling pathway independently of LGR4-6 receptors, possibly by acting as a direct antagonistic ligand to RNF43 and ZNRF3. The polypeptide is R-spondin-3 (Rspo3) (Mus musculus (Mouse)).